The primary structure comprises 224 residues: 2-C-methyl-D-erythritol 4-phosphate cytidylyltransferase (224 aa).

This sequence belongs to the IspD/TarI cytidylyltransferase family. IspD subfamily.

The enzyme catalyses 2-C-methyl-D-erythritol 4-phosphate + CTP + H(+) = 4-CDP-2-C-methyl-D-erythritol + diphosphate. It functions in the pathway isoprenoid biosynthesis; isopentenyl diphosphate biosynthesis via DXP pathway; isopentenyl diphosphate from 1-deoxy-D-xylulose 5-phosphate: step 2/6. Its function is as follows. Catalyzes the formation of 4-diphosphocytidyl-2-C-methyl-D-erythritol from CTP and 2-C-methyl-D-erythritol 4-phosphate (MEP). The polypeptide is 2-C-methyl-D-erythritol 4-phosphate cytidylyltransferase (Clostridium botulinum (strain Eklund 17B / Type B)).